A 333-amino-acid polypeptide reads, in one-letter code: Autoinducer 2 import system permease protein LsrD (333 aa).

10 helical membrane-spanning segments follow: residues 7-27 (YGWE…FGIA), 45-65 (ICIG…GIDI), 70-90 (TIGL…PMAA), 91-111 (AIPL…ALIL), 118-138 (LVIT…LSGI), 162-182 (LFGL…CWLF), 212-232 (TLYL…IVLV), 240-260 (SDLG…GGAN), 261-281 (IYGG…IGYL), and 288-308 (AGVP…IAVV).

This sequence belongs to the binding-protein-dependent transport system permease family. AraH/RbsC subfamily. In terms of assembly, the complex is composed of two ATP-binding proteins (LsrA), two transmembrane proteins (LsrC and LsrD) and a solute-binding protein (LsrB).

The protein resides in the cell inner membrane. Functionally, part of the ABC transporter complex LsrABCD involved in autoinducer 2 (AI-2) import. Probably responsible for the translocation of the substrate across the membrane. In Photorhabdus luminescens (Xenorhabdus luminescens), this protein is Autoinducer 2 import system permease protein LsrD (lsrD).